The following is a 394-amino-acid chain: Phosphoglycerate kinase (394 aa).

Residues 21-23 (DLN), Arg37, 60-63 (HLGR), Arg115, and Arg148 contribute to the substrate site. Residues Lys199, Glu321, and 347–350 (GGDT) contribute to the ATP site.

The protein belongs to the phosphoglycerate kinase family. As to quaternary structure, monomer.

The protein resides in the cytoplasm. It carries out the reaction (2R)-3-phosphoglycerate + ATP = (2R)-3-phospho-glyceroyl phosphate + ADP. It functions in the pathway carbohydrate degradation; glycolysis; pyruvate from D-glyceraldehyde 3-phosphate: step 2/5. In Azoarcus sp. (strain BH72), this protein is Phosphoglycerate kinase.